A 142-amino-acid chain; its full sequence is Large ribosomal subunit protein uL16 (142 aa).

It belongs to the universal ribosomal protein uL16 family. In terms of assembly, part of the 50S ribosomal subunit.

In terms of biological role, binds 23S rRNA and is also seen to make contacts with the A and possibly P site tRNAs. This chain is Large ribosomal subunit protein uL16, found in Pseudothermotoga lettingae (strain ATCC BAA-301 / DSM 14385 / NBRC 107922 / TMO) (Thermotoga lettingae).